Here is a 939-residue protein sequence, read N- to C-terminus: Phosphoenolpyruvate carboxylase (939 aa).

Active-site residues include histidine 151 and lysine 593.

The protein belongs to the PEPCase type 1 family. Mg(2+) is required as a cofactor.

The enzyme catalyses oxaloacetate + phosphate = phosphoenolpyruvate + hydrogencarbonate. Forms oxaloacetate, a four-carbon dicarboxylic acid source for the tricarboxylic acid cycle. This chain is Phosphoenolpyruvate carboxylase, found in Gloeobacter violaceus (strain ATCC 29082 / PCC 7421).